Consider the following 305-residue polypeptide: Ornithine carbamoyltransferase, catabolic (305 aa).

Carbamoyl phosphate contacts are provided by residues 50–53 (STRT), Gln-77, Arg-101, and 128–131 (HPLQ). L-ornithine contacts are provided by residues Asn-159, Asp-223, and 227–228 (SM). Residues 263-264 (CL) and Arg-291 each bind carbamoyl phosphate.

The protein belongs to the aspartate/ornithine carbamoyltransferase superfamily. OTCase family.

Its subcellular location is the cytoplasm. The enzyme catalyses carbamoyl phosphate + L-ornithine = L-citrulline + phosphate + H(+). The protein operates within amino-acid degradation; L-arginine degradation via ADI pathway; carbamoyl phosphate from L-arginine: step 2/2. Functionally, reversibly catalyzes the transfer of the carbamoyl group from carbamoyl phosphate (CP) to the N(epsilon) atom of ornithine (ORN) to produce L-citrulline. The polypeptide is Ornithine carbamoyltransferase, catabolic (Thermoplasma acidophilum (strain ATCC 25905 / DSM 1728 / JCM 9062 / NBRC 15155 / AMRC-C165)).